Here is a 306-residue protein sequence, read N- to C-terminus: MGECMLKTNICGIEFKNPVFLASGIMGETGSALKRIAKGGAGAVTTKSIGLNPNPGHKNPTIVEVYGGFLNAMGLPNPGVDEYLEEIEKVRDELNRMDVRIIGSIYGKDEEEFAEVAKKMERYVDIIELNISCPHAKGYGATIGQNPDLSYDVCKAVKKAVKIPVFAKLTPNVTDIIEIAQAVVDAGVDGLVAINTVRGMAIDIRAKKPILANKFGGLSGKAIKSIGIKVVWDLYENFDVPIIGVGGIMSGEDAIEYMMAGASAVQIGSGVYYRGYDIFKKVCDEIISFLKEENLTLEEIVGMAHE.

FMN contacts are provided by residues Ser23 and 47-48 (KS). Residues Lys47, 71-75 (NAMGL), and Asn130 each bind substrate. Residue Asn130 participates in FMN binding. The active-site Nucleophile is the Cys133. Residues Lys168 and Ile194 each coordinate FMN. Substrate is bound at residue 195–196 (NT). FMN-binding positions include Gly220, 246–247 (GG), and 268–269 (GS).

This sequence belongs to the dihydroorotate dehydrogenase family. Type 1 subfamily. In terms of assembly, heterotetramer of 2 PyrK and 2 PyrD type B subunits. Requires FMN as cofactor.

It localises to the cytoplasm. The enzyme catalyses (S)-dihydroorotate + NAD(+) = orotate + NADH + H(+). Its pathway is pyrimidine metabolism; UMP biosynthesis via de novo pathway; orotate from (S)-dihydroorotate (NAD(+) route): step 1/1. Functionally, catalyzes the conversion of dihydroorotate to orotate with NAD(+) as electron acceptor. The protein is Dihydroorotate dehydrogenase B (NAD(+)), catalytic subunit (pyrD) of Methanocaldococcus jannaschii (strain ATCC 43067 / DSM 2661 / JAL-1 / JCM 10045 / NBRC 100440) (Methanococcus jannaschii).